Here is a 57-residue protein sequence, read N- to C-terminus: MLSWVVTFLVVALIAGILGFGGIAGASIEIAKVIFFIAVVLFLISAVVGLARGRTRV.

The next 2 helical transmembrane spans lie at 4–24 and 30–50; these read WVVT…GGIA and IAKV…VVGL.

The protein belongs to the UPF0391 family.

The protein resides in the cell membrane. The polypeptide is UPF0391 membrane protein RPD_3366 (Rhodopseudomonas palustris (strain BisB5)).